Here is a 431-residue protein sequence, read N- to C-terminus: UDP-N-acetylglucosamine 1-carboxyvinyltransferase (431 aa).

Lys-24–Asn-25 lines the phosphoenolpyruvate pocket. Arg-95 serves as a coordination point for UDP-N-acetyl-alpha-D-glucosamine. Asp-119 functions as the Proton donor in the catalytic mechanism. UDP-N-acetyl-alpha-D-glucosamine-binding residues include Asp-314 and Met-336.

The protein belongs to the EPSP synthase family. MurA subfamily.

It is found in the cytoplasm. The enzyme catalyses phosphoenolpyruvate + UDP-N-acetyl-alpha-D-glucosamine = UDP-N-acetyl-3-O-(1-carboxyvinyl)-alpha-D-glucosamine + phosphate. It functions in the pathway cell wall biogenesis; peptidoglycan biosynthesis. Functionally, cell wall formation. Adds enolpyruvyl to UDP-N-acetylglucosamine. The polypeptide is UDP-N-acetylglucosamine 1-carboxyvinyltransferase (Bradyrhizobium diazoefficiens (strain JCM 10833 / BCRC 13528 / IAM 13628 / NBRC 14792 / USDA 110)).